We begin with the raw amino-acid sequence, 316 residues long: Probable cell division protein WhiA (316 aa).

A DNA-binding region (H-T-H motif) is located at residues 275–309 (TLKELGEMVSSGKISKSGINHRLRKLDEIAEQLRS).

This sequence belongs to the WhiA family.

Functionally, involved in cell division and chromosome segregation. This chain is Probable cell division protein WhiA, found in Bacillus licheniformis (strain ATCC 14580 / DSM 13 / JCM 2505 / CCUG 7422 / NBRC 12200 / NCIMB 9375 / NCTC 10341 / NRRL NRS-1264 / Gibson 46).